Here is a 354-residue protein sequence, read N- to C-terminus: Holliday junction branch migration complex subunit RuvB (354 aa).

A large ATPase domain (RuvB-L) region spans residues 4 to 190 (TDKLAAERII…FGIVARLEFY (187 aa)). ATP is bound by residues L29, R30, G71, K74, T75, T76, 137–139 (EDY), R180, Y190, and R227. T75 contacts Mg(2+). Residues 191–261 (DADQLARIVR…VADAALAMLD (71 aa)) form a small ATPAse domain (RuvB-S) region. The head domain (RuvB-H) stretch occupies residues 264 to 354 (PVGFDLMDRK…RGMWDTPAGK (91 aa)). 3 residues coordinate DNA: R300, R319, and R324.

This sequence belongs to the RuvB family. As to quaternary structure, homohexamer. Forms an RuvA(8)-RuvB(12)-Holliday junction (HJ) complex. HJ DNA is sandwiched between 2 RuvA tetramers; dsDNA enters through RuvA and exits via RuvB. An RuvB hexamer assembles on each DNA strand where it exits the tetramer. Each RuvB hexamer is contacted by two RuvA subunits (via domain III) on 2 adjacent RuvB subunits; this complex drives branch migration. In the full resolvosome a probable DNA-RuvA(4)-RuvB(12)-RuvC(2) complex forms which resolves the HJ.

It is found in the cytoplasm. The catalysed reaction is ATP + H2O = ADP + phosphate + H(+). The RuvA-RuvB-RuvC complex processes Holliday junction (HJ) DNA during genetic recombination and DNA repair, while the RuvA-RuvB complex plays an important role in the rescue of blocked DNA replication forks via replication fork reversal (RFR). RuvA specifically binds to HJ cruciform DNA, conferring on it an open structure. The RuvB hexamer acts as an ATP-dependent pump, pulling dsDNA into and through the RuvAB complex. RuvB forms 2 homohexamers on either side of HJ DNA bound by 1 or 2 RuvA tetramers; 4 subunits per hexamer contact DNA at a time. Coordinated motions by a converter formed by DNA-disengaged RuvB subunits stimulates ATP hydrolysis and nucleotide exchange. Immobilization of the converter enables RuvB to convert the ATP-contained energy into a lever motion, pulling 2 nucleotides of DNA out of the RuvA tetramer per ATP hydrolyzed, thus driving DNA branch migration. The RuvB motors rotate together with the DNA substrate, which together with the progressing nucleotide cycle form the mechanistic basis for DNA recombination by continuous HJ branch migration. Branch migration allows RuvC to scan DNA until it finds its consensus sequence, where it cleaves and resolves cruciform DNA. The sequence is that of Holliday junction branch migration complex subunit RuvB from Burkholderia ambifaria (strain MC40-6).